Here is a 370-residue protein sequence, read N- to C-terminus: 4-hydroxy-3-methylbut-2-en-1-yl diphosphate synthase (flavodoxin) (370 aa).

Residues C268, C271, C303, and E310 each contribute to the [4Fe-4S] cluster site.

Belongs to the IspG family. The cofactor is [4Fe-4S] cluster.

It catalyses the reaction (2E)-4-hydroxy-3-methylbut-2-enyl diphosphate + oxidized [flavodoxin] + H2O + 2 H(+) = 2-C-methyl-D-erythritol 2,4-cyclic diphosphate + reduced [flavodoxin]. Its pathway is isoprenoid biosynthesis; isopentenyl diphosphate biosynthesis via DXP pathway; isopentenyl diphosphate from 1-deoxy-D-xylulose 5-phosphate: step 5/6. Functionally, converts 2C-methyl-D-erythritol 2,4-cyclodiphosphate (ME-2,4cPP) into 1-hydroxy-2-methyl-2-(E)-butenyl 4-diphosphate. The sequence is that of 4-hydroxy-3-methylbut-2-en-1-yl diphosphate synthase (flavodoxin) from Bacillus cereus (strain G9842).